The chain runs to 403 residues: Na(+)-translocating NADH-quinone reductase subunit B (403 aa).

9 helical membrane-spanning segments follow: residues Met56–Gly76, Ala121–Phe141, Leu164–Gly184, Gly225–Gly245, Gly260–Thr280, Ile287–Ser307, Met312–Phe332, Trp348–Phe368, and Gly371–Val391. Thr230 is subject to FMN phosphoryl threonine.

This sequence belongs to the NqrB/RnfD family. As to quaternary structure, composed of six subunits; NqrA, NqrB, NqrC, NqrD, NqrE and NqrF. FMN is required as a cofactor.

It localises to the cell inner membrane. It carries out the reaction a ubiquinone + n Na(+)(in) + NADH + H(+) = a ubiquinol + n Na(+)(out) + NAD(+). In terms of biological role, NQR complex catalyzes the reduction of ubiquinone-1 to ubiquinol by two successive reactions, coupled with the transport of Na(+) ions from the cytoplasm to the periplasm. NqrA to NqrE are probably involved in the second step, the conversion of ubisemiquinone to ubiquinol. This Pseudomonas paraeruginosa (strain DSM 24068 / PA7) (Pseudomonas aeruginosa (strain PA7)) protein is Na(+)-translocating NADH-quinone reductase subunit B.